Here is a 359-residue protein sequence, read N- to C-terminus: UPF0284 protein MTH_1426 (359 aa).

The protein belongs to the UPF0284 family.

The sequence is that of UPF0284 protein MTH_1426 from Methanothermobacter thermautotrophicus (strain ATCC 29096 / DSM 1053 / JCM 10044 / NBRC 100330 / Delta H) (Methanobacterium thermoautotrophicum).